A 378-amino-acid chain; its full sequence is Zinc transporter 7 (378 aa).

The Cytoplasmic portion of the chain corresponds to 1–37 (MLPLSIKDDEYKPPRLNLFRKMSGWFRSILADKTSRN). The helical transmembrane segment at 38 to 58 (LFFFLCLNLSFAFVELLYGVW) threads the bilayer. At 59–67 (SNSLGLISD) the chain is on the lumenal side. The chain crosses the membrane as a helical span at residues 68–88 (SFHMFFDCTALLAGLAASVIS). Residues 89 to 102 (KWRSNDAFSYGYVR) lie on the Cytoplasmic side of the membrane. The chain crosses the membrane as a helical span at residues 103-123 (AEVLAGFVNGLFLIFTAFFIF). Over 124 to 140 (SEGVERALEPPDVHHER) the chain is Lumenal. The helical transmembrane segment at 141-161 (LLPVSILGFIVNLIGIFVFQH) threads the bilayer. The segment at 161-223 (HGGHGHSHGS…HGQDYCHDDH (63 aa)) is his-rich loop. The Cytoplasmic segment spans residues 162 to 238 (GGHGHSHGSG…TGSSKQILQG (77 aa)). The interval 185–214 (HGHSHRGHGHSHEHKHGHTHDHGHSHGLSH) is disordered. The span at 186-211 (GHSHRGHGHSHEHKHGHTHDHGHSHG) shows a compositional bias: basic residues. Residues 239 to 259 (VFLHIVADTLGSIGVIISAIL) traverse the membrane as a helical segment. Residues 260–264 (MQNYG) are Lumenal-facing. A helical transmembrane segment spans residues 265–285 (LMIADPICSMLIALLIGVSIV). Topologically, residues 286 to 378 (PLLKESIGIL…LYIQIDVAAM (93 aa)) are cytoplasmic.

The protein belongs to the cation diffusion facilitator (CDF) transporter (TC 2.A.4) family. SLC30A subfamily. Homooligomer.

It is found in the golgi apparatus membrane. The protein resides in the cytoplasmic vesicle. It localises to the golgi apparatus. Its subcellular location is the trans-Golgi network. The protein localises to the sarcoplasmic reticulum. It is found in the mitochondrion. It carries out the reaction Zn(2+)(in) = Zn(2+)(out). Zinc ion transporter mediating zinc entry from the cytosol into the lumen of organelles along the secretory pathway. By contributing to zinc ion homeostasis within the early secretory pathway, regulates the activation and folding of enzymes like alkaline phosphatases. The polypeptide is Zinc transporter 7 (SLC30A7) (Gallus gallus (Chicken)).